Here is a 496-residue protein sequence, read N- to C-terminus: Glycerol kinase (496 aa).

Thr11 is an ADP binding site. The ATP site is built by Thr11, Thr12, and Ser13. A sn-glycerol 3-phosphate-binding site is contributed by Thr11. Arg15 provides a ligand contact to ADP. 4 residues coordinate sn-glycerol 3-phosphate: Arg81, Glu82, Tyr133, and Asp242. Glycerol-binding residues include Arg81, Glu82, Tyr133, Asp242, and Gln243. 2 residues coordinate ADP: Thr264 and Gly307. Positions 264, 307, 311, and 408 each coordinate ATP. Positions 408 and 412 each coordinate ADP.

The protein belongs to the FGGY kinase family.

The enzyme catalyses glycerol + ATP = sn-glycerol 3-phosphate + ADP + H(+). The protein operates within polyol metabolism; glycerol degradation via glycerol kinase pathway; sn-glycerol 3-phosphate from glycerol: step 1/1. Its activity is regulated as follows. Inhibited by fructose 1,6-bisphosphate (FBP). Its function is as follows. Key enzyme in the regulation of glycerol uptake and metabolism. Catalyzes the phosphorylation of glycerol to yield sn-glycerol 3-phosphate. The chain is Glycerol kinase from Aromatoleum aromaticum (strain DSM 19018 / LMG 30748 / EbN1) (Azoarcus sp. (strain EbN1)).